A 544-amino-acid polypeptide reads, in one-letter code: Chaperonin GroEL (544 aa).

ATP-binding positions include threonine 30–proline 33, lysine 51, aspartate 87–threonine 91, glycine 415, aspartate 481–leucine 483, and aspartate 497.

This sequence belongs to the chaperonin (HSP60) family. As to quaternary structure, forms a cylinder of 14 subunits composed of two heptameric rings stacked back-to-back. Interacts with the co-chaperonin GroES.

The protein localises to the cytoplasm. It carries out the reaction ATP + H2O + a folded polypeptide = ADP + phosphate + an unfolded polypeptide.. In terms of biological role, together with its co-chaperonin GroES, plays an essential role in assisting protein folding. The GroEL-GroES system forms a nano-cage that allows encapsulation of the non-native substrate proteins and provides a physical environment optimized to promote and accelerate protein folding. The polypeptide is Chaperonin GroEL (Chlamydia trachomatis serovar A (strain ATCC VR-571B / DSM 19440 / HAR-13)).